The sequence spans 245 residues: Enolase-phosphatase E1 (245 aa).

The protein belongs to the HAD-like hydrolase superfamily. MasA/MtnC family. As to quaternary structure, monomer. The cofactor is Mg(2+).

It catalyses the reaction 5-methylsulfanyl-2,3-dioxopentyl phosphate + H2O = 1,2-dihydroxy-5-(methylsulfanyl)pent-1-en-3-one + phosphate. It participates in amino-acid biosynthesis; L-methionine biosynthesis via salvage pathway; L-methionine from S-methyl-5-thio-alpha-D-ribose 1-phosphate: step 3/6. Its pathway is amino-acid biosynthesis; L-methionine biosynthesis via salvage pathway; L-methionine from S-methyl-5-thio-alpha-D-ribose 1-phosphate: step 4/6. In terms of biological role, bifunctional enzyme that catalyzes the enolization of 2,3-diketo-5-methylthiopentyl-1-phosphate (DK-MTP-1-P) into the intermediate 2-hydroxy-3-keto-5-methylthiopentenyl-1-phosphate (HK-MTPenyl-1-P), which is then dephosphorylated to form the acireductone 1,2-dihydroxy-3-keto-5-methylthiopentene (DHK-MTPene). This chain is Enolase-phosphatase E1, found in Parasynechococcus marenigrum (strain WH8102).